The sequence spans 128 residues: RutC family protein BU371 (128 aa).

This sequence belongs to the RutC family.

The chain is RutC family protein BU371 from Buchnera aphidicola subsp. Acyrthosiphon pisum (strain APS) (Acyrthosiphon pisum symbiotic bacterium).